Consider the following 562-residue polypeptide: Proton channel OTOP2 (562 aa).

The tract at residues 1–20 (MSEELAQGPKESPPAPRAGP) is disordered. The next 12 membrane-spanning stretches (helical) occupy residues 30 to 50 (LLSV…ISGG), 62 to 82 (VFAL…FYLL), 100 to 120 (PIWL…MDVF), 137 to 157 (ILHP…LWVS), 169 to 189 (TWCG…AAVV), 241 to 261 (FYLY…LYVM), 289 to 309 (FFAG…VFII), 324 to 344 (ALVI…LVSL), 371 to 391 (LLMG…VAVV), 402 to 422 (LNLT…MFII), 495 to 515 (DISL…AFGA), and 527 to 547 (FYGY…GIFY).

This sequence belongs to the otopetrin family.

It is found in the cell membrane. It catalyses the reaction H(+)(in) = H(+)(out). Actives at neutral and alkaline extracellular pH, acid extracellular pH appears to inhibit the channel. Insensitive to activation by Zn(2+). In terms of biological role, proton-selective ion channel open at neutral pH. Actives at neutral and alkaline extracellular pH, likely participates in some alkali-related physiological activities. The protein is Proton channel OTOP2 of Homo sapiens (Human).